The primary structure comprises 259 residues: Cobalt transport protein CbiM (259 aa).

Residues 1 to 25 (MFRRTTWLTLYLLLAMAALARPAFA) form the signal peptide. Helical transmembrane passes span 31 to 51 (GFLPFNWAAFWFIVVLPFWIW), 68 to 88 (MLLGLAGAYTFVLSALKLPSV), 100 to 120 (LGAVLFGPAAMSILGGIVLLF), 132 to 152 (TLGANTFSMAVVGPFVAYGLY), 160 to 180 (GSMPLAVFLAATLGDLMTYVT), and 206 to 226 (IFAVTQLPLAISEGFLTVIVF).

Belongs to the CbiM family. Forms an energy-coupling factor (ECF) transporter complex composed of an ATP-binding protein (A component, CbiO), a transmembrane protein (T component, CbiQ) and 2 possible substrate-capture proteins (S components, CbiM and CbiN) of unknown stoichimetry.

The protein resides in the cell membrane. The protein operates within cofactor biosynthesis; adenosylcobalamin biosynthesis. Part of the energy-coupling factor (ECF) transporter complex CbiMNOQ involved in cobalt import. The chain is Cobalt transport protein CbiM from Moorella thermoacetica (strain ATCC 39073 / JCM 9320).